The primary structure comprises 257 residues: Transmembrane protein C257L (257 aa).

The next 2 membrane-spanning stretches (helical) occupy residues 123 to 143 and 163 to 183; these read LELLGYSPTPIIGGDFMFTAL and MMIFFLIILLCVILGIFYVLV.

This sequence belongs to the asfivirus C257R family.

It localises to the host membrane. The protein resides in the virion. This is Transmembrane protein C257L from African swine fever virus (strain Badajoz 1971 Vero-adapted) (Ba71V).